Consider the following 472-residue polypeptide: Argininosuccinate lyase (472 aa).

This sequence belongs to the lyase 1 family. Argininosuccinate lyase subfamily.

The protein localises to the cytoplasm. The catalysed reaction is 2-(N(omega)-L-arginino)succinate = fumarate + L-arginine. It participates in amino-acid biosynthesis; L-arginine biosynthesis; L-arginine from L-ornithine and carbamoyl phosphate: step 3/3. The protein is Argininosuccinate lyase of Synechococcus sp. (strain CC9902).